The primary structure comprises 250 residues: Triosephosphate isomerase (250 aa).

Residue 9-11 (NWK) coordinates substrate. H96 serves as the catalytic Electrophile. Residue E166 is the Proton acceptor of the active site. Residues G172, S212, and 233-234 (GG) each bind substrate.

Belongs to the triosephosphate isomerase family. In terms of assembly, homodimer.

Its subcellular location is the cytoplasm. The catalysed reaction is D-glyceraldehyde 3-phosphate = dihydroxyacetone phosphate. It functions in the pathway carbohydrate biosynthesis; gluconeogenesis. Its pathway is carbohydrate degradation; glycolysis; D-glyceraldehyde 3-phosphate from glycerone phosphate: step 1/1. Its function is as follows. Involved in the gluconeogenesis. Catalyzes stereospecifically the conversion of dihydroxyacetone phosphate (DHAP) to D-glyceraldehyde-3-phosphate (G3P). In Chlorobium phaeobacteroides (strain BS1), this protein is Triosephosphate isomerase.